A 146-amino-acid chain; its full sequence is 3-dehydroquinate dehydratase (146 aa).

Residue Tyr-22 is the Proton acceptor of the active site. The substrate site is built by Asn-73, His-79, and Asp-86. The Proton donor role is filled by His-99. Residues 100–101 (LS) and Arg-110 each bind substrate.

Belongs to the type-II 3-dehydroquinase family. Homododecamer.

The catalysed reaction is 3-dehydroquinate = 3-dehydroshikimate + H2O. The protein operates within metabolic intermediate biosynthesis; chorismate biosynthesis; chorismate from D-erythrose 4-phosphate and phosphoenolpyruvate: step 3/7. Functionally, catalyzes a trans-dehydration via an enolate intermediate. This is 3-dehydroquinate dehydratase from Synechococcus sp. (strain CC9902).